A 212-amino-acid chain; its full sequence is Redox-sensing transcriptional repressor Rex (212 aa).

The H-T-H motif DNA-binding region spans 16 to 55; it reads IYYRYLNILLDADKTRVSSTELSEAVKVDSATIRRDFSYF. Position 90–95 (90–95) interacts with NAD(+); that stretch reads GVGNLG.

This sequence belongs to the transcriptional regulatory Rex family. As to quaternary structure, homodimer.

It localises to the cytoplasm. Functionally, modulates transcription in response to changes in cellular NADH/NAD(+) redox state. The protein is Redox-sensing transcriptional repressor Rex of Levilactobacillus brevis (strain ATCC 367 / BCRC 12310 / CIP 105137 / JCM 1170 / LMG 11437 / NCIMB 947 / NCTC 947) (Lactobacillus brevis).